A 256-amino-acid polypeptide reads, in one-letter code: Omega-amidase YafV (256 aa).

The CN hydrolase domain maps to 4–234; sequence LKITLLQQPL…ATRIDAELSM (231 aa). Glu42 functions as the Proton acceptor in the catalytic mechanism. Lys107 acts as the Proton donor in catalysis. The active-site Nucleophile is Cys141.

The protein belongs to the carbon-nitrogen hydrolase superfamily. NIT1/NIT2 family.

The catalysed reaction is a monoamide of a dicarboxylate + H2O = a dicarboxylate + NH4(+). Hydrolyzes alpha-ketoglutaramate (a-KGM) to alpha-ketoglutarate (alpha-KG) and ammonia, has weak activity on L-glutamine, almost no activity on deaminated glutathione (dGSH) and none on glutathione. May function as a metabolite repair enzyme. This is Omega-amidase YafV (yafV) from Escherichia coli (strain K12).